The chain runs to 331 residues: NADH-ubiquinone oxidoreductase chain 1 (331 aa).

Transmembrane regions (helical) follow at residues 8-28 (LLEILVVLVPILLSVAFMTVI), 75-95 (LFFLAPMVTLIFSLLGWGVIP), 107-127 (LGILYSLALSSIGVYGILFAG), 147-167 (ISYELIYSAAVLAVILLCGTF), 178-198 (SVWYIMPLLPIFILFFVSALA), 224-244 (GMIFVFFFLAEYGSIVLMSTF), 266-286 (FINLQSIALAVKAVLIMFLFV), and 308-328 (MLPVAIALLILVPSLLIAFDI).

It belongs to the complex I subunit 1 family.

Its subcellular location is the mitochondrion inner membrane. The enzyme catalyses a ubiquinone + NADH + 5 H(+)(in) = a ubiquinol + NAD(+) + 4 H(+)(out). Its function is as follows. Core subunit of the mitochondrial membrane respiratory chain NADH dehydrogenase (Complex I) that is believed to belong to the minimal assembly required for catalysis. Complex I functions in the transfer of electrons from NADH to the respiratory chain. The immediate electron acceptor for the enzyme is believed to be ubiquinone. The sequence is that of NADH-ubiquinone oxidoreductase chain 1 (ND1) from Mycosarcoma maydis (Corn smut fungus).